Here is a 424-residue protein sequence, read N- to C-terminus: Serine--tRNA ligase (424 aa).

Residue 233-235 (TAE) participates in L-serine binding. 264-266 (RRE) is an ATP binding site. Glu287 contacts L-serine. ATP is bound at residue 351 to 354 (EISS). Residue Ser387 participates in L-serine binding.

It belongs to the class-II aminoacyl-tRNA synthetase family. Type-1 seryl-tRNA synthetase subfamily. Homodimer. The tRNA molecule binds across the dimer.

The protein resides in the cytoplasm. It catalyses the reaction tRNA(Ser) + L-serine + ATP = L-seryl-tRNA(Ser) + AMP + diphosphate + H(+). The enzyme catalyses tRNA(Sec) + L-serine + ATP = L-seryl-tRNA(Sec) + AMP + diphosphate + H(+). The protein operates within aminoacyl-tRNA biosynthesis; selenocysteinyl-tRNA(Sec) biosynthesis; L-seryl-tRNA(Sec) from L-serine and tRNA(Sec): step 1/1. Catalyzes the attachment of serine to tRNA(Ser). Is also able to aminoacylate tRNA(Sec) with serine, to form the misacylated tRNA L-seryl-tRNA(Sec), which will be further converted into selenocysteinyl-tRNA(Sec). This is Serine--tRNA ligase from Acaryochloris marina (strain MBIC 11017).